A 155-amino-acid chain; its full sequence is S-ribosylhomocysteine lyase (155 aa).

His58, His62, and Cys125 together coordinate Fe cation.

Belongs to the LuxS family. As to quaternary structure, homodimer. Requires Fe cation as cofactor.

It catalyses the reaction S-(5-deoxy-D-ribos-5-yl)-L-homocysteine = (S)-4,5-dihydroxypentane-2,3-dione + L-homocysteine. Functionally, involved in the synthesis of autoinducer 2 (AI-2) which is secreted by bacteria and is used to communicate both the cell density and the metabolic potential of the environment. The regulation of gene expression in response to changes in cell density is called quorum sensing. Catalyzes the transformation of S-ribosylhomocysteine (RHC) to homocysteine (HC) and 4,5-dihydroxy-2,3-pentadione (DPD). The chain is S-ribosylhomocysteine lyase from Helicobacter pylori (strain P12).